Here is a 133-residue protein sequence, read N- to C-terminus: Holo-[acyl-carrier-protein] synthase (133 aa).

Residues aspartate 8 and glutamate 56 each contribute to the Mg(2+) site.

The protein belongs to the P-Pant transferase superfamily. AcpS family. Mg(2+) serves as cofactor.

The protein localises to the cytoplasm. It carries out the reaction apo-[ACP] + CoA = holo-[ACP] + adenosine 3',5'-bisphosphate + H(+). In terms of biological role, transfers the 4'-phosphopantetheine moiety from coenzyme A to a Ser of acyl-carrier-protein. The chain is Holo-[acyl-carrier-protein] synthase from Deinococcus radiodurans (strain ATCC 13939 / DSM 20539 / JCM 16871 / CCUG 27074 / LMG 4051 / NBRC 15346 / NCIMB 9279 / VKM B-1422 / R1).